A 336-amino-acid chain; its full sequence is Dihydroorotate dehydrogenase (quinone) (336 aa).

Residues 62 to 66 (AGLDK) and threonine 86 contribute to the FMN site. Lysine 66 serves as a coordination point for substrate. Position 111-115 (111-115 (NRMGF)) interacts with substrate. Positions 139 and 172 each coordinate FMN. Asparagine 172 serves as a coordination point for substrate. Serine 175 serves as the catalytic Nucleophile. Asparagine 177 lines the substrate pocket. Residues lysine 217 and threonine 245 each contribute to the FMN site. Position 246–247 (246–247 (NT)) interacts with substrate. FMN contacts are provided by residues glycine 268, glycine 297, and 318-319 (YS).

This sequence belongs to the dihydroorotate dehydrogenase family. Type 2 subfamily. Monomer. The cofactor is FMN.

The protein localises to the cell membrane. The enzyme catalyses (S)-dihydroorotate + a quinone = orotate + a quinol. Its pathway is pyrimidine metabolism; UMP biosynthesis via de novo pathway; orotate from (S)-dihydroorotate (quinone route): step 1/1. Catalyzes the conversion of dihydroorotate to orotate with quinone as electron acceptor. The protein is Dihydroorotate dehydrogenase (quinone) of Aliivibrio fischeri (strain MJ11) (Vibrio fischeri).